Reading from the N-terminus, the 199-residue chain is WASH complex subunit 3 (199 aa).

A coiled-coil region spans residues 47–76 (VCEEKLSALSLRIQQIETTLNILEAKLSSI). Residues 93 to 120 (NISNGHLPSQPDAQSVVVSPQSDNNSMN) show a composition bias toward polar residues. 2 disordered regions span residues 93 to 136 (NISN…NITT) and 170 to 199 (PDLL…SFSD). Residues 183 to 192 (GEPEAEESSD) show a composition bias toward acidic residues.

This sequence belongs to the CCDC53 family. As to quaternary structure, component of the WASH complex.

The polypeptide is WASH complex subunit 3 (Xenopus laevis (African clawed frog)).